The sequence spans 434 residues: Enolase (434 aa).

Gln165 is a binding site for (2R)-2-phosphoglycerate. The active-site Proton donor is Glu207. Positions 244, 291, and 318 each coordinate Mg(2+). (2R)-2-phosphoglycerate-binding residues include Lys343, Arg372, Ser373, and Lys394. The active-site Proton acceptor is the Lys343.

This sequence belongs to the enolase family. Requires Mg(2+) as cofactor.

The protein resides in the cytoplasm. Its subcellular location is the secreted. The protein localises to the cell surface. The enzyme catalyses (2R)-2-phosphoglycerate = phosphoenolpyruvate + H2O. It functions in the pathway carbohydrate degradation; glycolysis; pyruvate from D-glyceraldehyde 3-phosphate: step 4/5. In terms of biological role, catalyzes the reversible conversion of 2-phosphoglycerate (2-PG) into phosphoenolpyruvate (PEP). It is essential for the degradation of carbohydrates via glycolysis. This chain is Enolase, found in Staphylococcus haemolyticus (strain JCSC1435).